We begin with the raw amino-acid sequence, 238 residues long: Small ribosomal subunit protein uS2c (238 aa).

Belongs to the universal ribosomal protein uS2 family.

Its subcellular location is the plastid. It is found in the chloroplast. In Oltmannsiellopsis viridis (Marine flagellate), this protein is Small ribosomal subunit protein uS2c (rps2).